A 187-amino-acid chain; its full sequence is 1,6-anhydro-N-acetylmuramyl-L-alanine amidase AmpD (187 aa).

An N-acetylmuramoyl-L-alanine amidase domain is found at 30–167 (LLVVHNISLP…APERKTDPGP (138 aa)). Zn(2+) is bound at residue His34. The Proton acceptor role is filled by Glu116. Zn(2+) contacts are provided by His154 and Asp164.

Belongs to the N-acetylmuramoyl-L-alanine amidase 2 family. Zn(2+) serves as cofactor.

The protein localises to the cytoplasm. The enzyme catalyses Hydrolyzes the link between N-acetylmuramoyl residues and L-amino acid residues in certain cell-wall glycopeptides.. With respect to regulation, amidase activity is inhibited by metal chelators such as EDTA, dipicolinic acid or 1,10-phenanthroline. In terms of biological role, involved in cell wall peptidoglycan recycling. Specifically cleaves the amide bond between the lactyl group of N-acetylmuramic acid and the alpha-amino group of the L-alanine in degradation products containing an anhydro N-acetylmuramyl moiety. Is also involved in beta-lactamase induction. The chain is 1,6-anhydro-N-acetylmuramyl-L-alanine amidase AmpD from Citrobacter freundii.